Consider the following 300-residue polypeptide: MTTVGFDVAARLGTLLTAMVTPFSGDGSLDTATAARLANHLVDQGCDGLVVSGTTGESPTTTDGEKIELLRAVLEAVGDRARVIAGAGTYDTAHSIRLAKACAAEGAHGLLVVTPYYSKPPQRGLQAHFTAVADATELPMLLYDIPGRSAVPIEPDTIRALASHPNIVGVKDAKADLHSGAQIMADTGLAYYSGDDALNLPWLAMGATGFISVIAHLAAGQLRELLSAFGSGDIATARKINIAVAPLCNAMSRLGGVTLSKAGLRLQGIDVGDPRLPQVAATPEQIDALAADMRAASVLR.

A pyruvate-binding site is contributed by T55. The active-site Proton donor/acceptor is Y143. Catalysis depends on K171, which acts as the Schiff-base intermediate with substrate. I211 lines the pyruvate pocket.

The protein belongs to the DapA family. As to quaternary structure, homotetramer; dimer of dimers.

The protein localises to the cytoplasm. It catalyses the reaction L-aspartate 4-semialdehyde + pyruvate = (2S,4S)-4-hydroxy-2,3,4,5-tetrahydrodipicolinate + H2O + H(+). It participates in amino-acid biosynthesis; L-lysine biosynthesis via DAP pathway; (S)-tetrahydrodipicolinate from L-aspartate: step 3/4. Catalyzes the condensation of (S)-aspartate-beta-semialdehyde [(S)-ASA] and pyruvate to 4-hydroxy-tetrahydrodipicolinate (HTPA). The chain is 4-hydroxy-tetrahydrodipicolinate synthase from Mycobacterium bovis (strain ATCC BAA-935 / AF2122/97).